Here is a 311-residue protein sequence, read N- to C-terminus: Urease accessory protein UreD (311 aa).

It belongs to the UreD family. As to quaternary structure, ureD, UreF and UreG form a complex that acts as a GTP-hydrolysis-dependent molecular chaperone, activating the urease apoprotein by helping to assemble the nickel containing metallocenter of UreC. The UreE protein probably delivers the nickel.

It is found in the cytoplasm. In terms of biological role, required for maturation of urease via the functional incorporation of the urease nickel metallocenter. This is Urease accessory protein UreD from Synechococcus sp. (strain CC9902).